Reading from the N-terminus, the 368-residue chain is Probable dual-specificity RNA methyltransferase RlmN (368 aa).

The active-site Proton acceptor is the Glu109. Residues 115 to 355 (YPDRVTMCIS…VTVRDTRGQE (241 aa)) enclose the Radical SAM core domain. Cys122 and Cys360 are oxidised to a cystine. Residues Cys129, Cys133, and Cys136 each contribute to the [4Fe-4S] cluster site. Residues 184 to 185 (GE), Ser218, 241 to 243 (SLH), and Asn317 contribute to the S-adenosyl-L-methionine site. Residue Cys360 is the S-methylcysteine intermediate of the active site.

Belongs to the radical SAM superfamily. RlmN family. Requires [4Fe-4S] cluster as cofactor.

Its subcellular location is the cytoplasm. The enzyme catalyses adenosine(2503) in 23S rRNA + 2 reduced [2Fe-2S]-[ferredoxin] + 2 S-adenosyl-L-methionine = 2-methyladenosine(2503) in 23S rRNA + 5'-deoxyadenosine + L-methionine + 2 oxidized [2Fe-2S]-[ferredoxin] + S-adenosyl-L-homocysteine. The catalysed reaction is adenosine(37) in tRNA + 2 reduced [2Fe-2S]-[ferredoxin] + 2 S-adenosyl-L-methionine = 2-methyladenosine(37) in tRNA + 5'-deoxyadenosine + L-methionine + 2 oxidized [2Fe-2S]-[ferredoxin] + S-adenosyl-L-homocysteine. Specifically methylates position 2 of adenine 2503 in 23S rRNA and position 2 of adenine 37 in tRNAs. The chain is Probable dual-specificity RNA methyltransferase RlmN from Streptomyces griseus subsp. griseus (strain JCM 4626 / CBS 651.72 / NBRC 13350 / KCC S-0626 / ISP 5235).